A 470-amino-acid chain; its full sequence is UTP--glucose-1-phosphate uridylyltransferase 1 (470 aa).

Ala-2 carries the post-translational modification N-acetylalanine. Residues 86–89 (LNGG), Lys-100, Gln-163, and Gly-192 contribute to the UTP site. 88-89 (GG) lines the substrate pocket. Substrate is bound by residues His-193 and 221 to 223 (NSD). Residues Asp-223 and Lys-361 each coordinate UTP.

Belongs to the UDPGP type 1 family. As to expression, expressed in roots, rosette leaves, cauline leaves, stems, flowers and siliques.

Its subcellular location is the cytoplasm. It catalyses the reaction alpha-D-glucose 1-phosphate + UTP + H(+) = UDP-alpha-D-glucose + diphosphate. In terms of biological role, converts glucose 1-phosphate to UDP-glucose, which is the major glycosyl donor for polysaccharides. Acts redundantly with UGP2 and is essential for the synthesis of sucrose, starch and cell wall, and callose deposition. Involved in the regulation of the programmed cell death (PCD) induced by the fungal toxin fumonisin B1 (FB1). The protein is UTP--glucose-1-phosphate uridylyltransferase 1 of Arabidopsis thaliana (Mouse-ear cress).